Reading from the N-terminus, the 224-residue chain is MQNAEAAPALLAAHGLVGRRGGRRPLDLNLRPGQLVHVRGANGSGKTSLLRTLAGLLRPRRGEVRWNGADIHADLPGYYLHMAYLGHDNGCSDALTARENLRYALHVAGAPRAEPELERALRDWGLAAGADAPAARLSQGQGRRLALARVMLSRKRLWLLDEPDAGLDAASLQRLHGMLDAHLAGGGAAVLASHRGGGAWAGCTQTLELDEYAHAEVVGADCLA.

Positions 1–220 (MQNAEAAPAL…EYAHAEVVGA (220 aa)) constitute an ABC transporter domain. 40–47 (GANGSGKT) provides a ligand contact to ATP.

It belongs to the ABC transporter superfamily. CcmA exporter (TC 3.A.1.107) family. In terms of assembly, the complex is composed of two ATP-binding proteins (CcmA) and two transmembrane proteins (CcmB).

Its subcellular location is the cell inner membrane. The enzyme catalyses heme b(in) + ATP + H2O = heme b(out) + ADP + phosphate + H(+). Its function is as follows. Part of the ABC transporter complex CcmAB involved in the biogenesis of c-type cytochromes; once thought to export heme, this seems not to be the case, but its exact role is uncertain. Responsible for energy coupling to the transport system. The protein is Cytochrome c biogenesis ATP-binding export protein CcmA of Bordetella bronchiseptica (strain ATCC BAA-588 / NCTC 13252 / RB50) (Alcaligenes bronchisepticus).